Reading from the N-terminus, the 509-residue chain is Mitogen-activated protein kinase sma-5 (509 aa).

The tract at residues 19 to 72 (DPITSMSPPQENRSPKAEYLNNFFNTNPTNGKSRGSQEAPRKPLGQTNLNVQGS) is disordered. Composition is skewed to polar residues over residues 20–30 (PITSMSPPQEN) and 40–54 (NFFN…SRGS). Residues 105–411 (YEPTQNIGSG…IQDALLHPYI (307 aa)) form the Protein kinase domain. Residues 111 to 119 (IGSGAFGIV) and Lys134 contribute to the ATP site. Catalysis depends on Asp231, which acts as the Proton acceptor. Positions 460–482 (YSELHSGDSTGSTSDMSTNTSGE) are disordered. A compositionally biased stretch (low complexity) spans 466–481 (GDSTGSTSDMSTNTSG).

The protein belongs to the protein kinase superfamily. CMGC Ser/Thr protein kinase family. MAP kinase subfamily. The cofactor is Mg(2+). In terms of tissue distribution, expressed in intestine with a stronger expression in the four most anterior cells, muscles, excretory cell, pharynx and, to a lesser extent, in hypodermis.

The enzyme catalyses L-seryl-[protein] + ATP = O-phospho-L-seryl-[protein] + ADP + H(+). It carries out the reaction L-threonyl-[protein] + ATP = O-phospho-L-threonyl-[protein] + ADP + H(+). Functionally, serine/threonine-protein kinase involved in the postembryonic regulation of body size, mainly through control of cell growth. In particular, controls the volume of intestine, muscles and hypodermis. In addition, regulates growth, intestinal granule distribution, lifespan and number of offspring. This is Mitogen-activated protein kinase sma-5 from Caenorhabditis elegans.